A 146-amino-acid polypeptide reads, in one-letter code: Universal stress protein MTH_1154 (146 aa).

This sequence belongs to the universal stress protein A family.

In Methanothermobacter thermautotrophicus (strain ATCC 29096 / DSM 1053 / JCM 10044 / NBRC 100330 / Delta H) (Methanobacterium thermoautotrophicum), this protein is Universal stress protein MTH_1154.